The sequence spans 1390 residues: DNA-directed RNA polymerase subunit beta (1390 aa).

This sequence belongs to the RNA polymerase beta chain family. The RNAP catalytic core consists of 2 alpha, 1 beta, 1 beta' and 1 omega subunit. When a sigma factor is associated with the core the holoenzyme is formed, which can initiate transcription.

It catalyses the reaction RNA(n) + a ribonucleoside 5'-triphosphate = RNA(n+1) + diphosphate. Its function is as follows. DNA-dependent RNA polymerase catalyzes the transcription of DNA into RNA using the four ribonucleoside triphosphates as substrates. The polypeptide is DNA-directed RNA polymerase subunit beta (Methylobacillus flagellatus (strain ATCC 51484 / DSM 6875 / VKM B-1610 / KT)).